The following is a 245-amino-acid chain: Ribonuclease PH (245 aa).

Phosphate contacts are provided by residues arginine 86 and 124-126; that span reads GTR.

This sequence belongs to the RNase PH family. As to quaternary structure, homohexameric ring arranged as a trimer of dimers.

The enzyme catalyses tRNA(n+1) + phosphate = tRNA(n) + a ribonucleoside 5'-diphosphate. Phosphorolytic 3'-5' exoribonuclease that plays an important role in tRNA 3'-end maturation. Removes nucleotide residues following the 3'-CCA terminus of tRNAs; can also add nucleotides to the ends of RNA molecules by using nucleoside diphosphates as substrates, but this may not be physiologically important. Probably plays a role in initiation of 16S rRNA degradation (leading to ribosome degradation) during starvation. The protein is Ribonuclease PH of Bacillus anthracis (strain A0248).